We begin with the raw amino-acid sequence, 651 residues long: Acetyl-coenzyme A synthetase (651 aa).

CoA contacts are provided by residues 189-192 (RGGK), Thr311, and Asn335. Residues 387 to 389 (GEP), 411 to 416 (DTWWQT), Asp500, and Arg515 each bind ATP. Ser523 lines the CoA pocket. Arg526 contacts ATP. Mg(2+) is bound by residues Val537, His539, and Val542. Arg586 lines the CoA pocket. N6-acetyllysine is present on Lys611.

The protein belongs to the ATP-dependent AMP-binding enzyme family. Mg(2+) serves as cofactor. In terms of processing, acetylated. Deacetylation by the SIR2-homolog deacetylase activates the enzyme.

It catalyses the reaction acetate + ATP + CoA = acetyl-CoA + AMP + diphosphate. In terms of biological role, catalyzes the conversion of acetate into acetyl-CoA (AcCoA), an essential intermediate at the junction of anabolic and catabolic pathways. AcsA undergoes a two-step reaction. In the first half reaction, AcsA combines acetate with ATP to form acetyl-adenylate (AcAMP) intermediate. In the second half reaction, it can then transfer the acetyl group from AcAMP to the sulfhydryl group of CoA, forming the product AcCoA. The polypeptide is Acetyl-coenzyme A synthetase (Brucella melitensis biotype 2 (strain ATCC 23457)).